The following is a 798-amino-acid chain: Peregrinol diphosphate synthase TPS1, chloroplastic (798 aa).

The transit peptide at 1–25 (MASLSTPNINNTTFVNSKTQLPAVK) directs the protein to the chloroplast. K243 contacts substrate. Mg(2+) contacts are provided by D377 and D379. Residues 377–380 (DLDD) carry the DXDD motif motif. Residue K463 participates in substrate binding.

Belongs to the terpene synthase family. Mg(2+) is required as a cofactor. As to expression, mostly expressed in trichomes of leaves and fruits.

It localises to the plastid. It is found in the chloroplast. The catalysed reaction is peregrinol diphosphate = (2E,6E,10E)-geranylgeranyl diphosphate + H2O. It functions in the pathway secondary metabolite biosynthesis; terpenoid biosynthesis. Involved in the biosynthesis of labdane-type diterpenoid including cleroda-dienols, and peregrinol lactones and furan derivatives, dopaminergic diterpenoids that can bind to dopamine receptors in the human pituitary gland, have probably ability to lower prolactin levels, and are used to treat menstrual cycle disorders (e.g. premenstrual syndrome and mastodynia). Terpene synthase that produces peregrinol diphosphate from geranylgeranyl diphosphate (GGPP). The polypeptide is Peregrinol diphosphate synthase TPS1, chloroplastic (Vitex agnus-castus (Chaste tree)).